Consider the following 395-residue polypeptide: MMKPEFFCFSGFCVYFLFLQVVVSSEKLRVTTPTRHLLARVGGQAELSCQVIPPHSVMHMEVRWFRSGHSQPVYLYRGGHKMSEEAAPEYANRTEFVKEAIGEGKVSLRIHNINILDDGPYQCSFNGSGFIDAAIMNLNVTAVGLETEIHVQAPDADGVMVECNSGGWFPRPQMEWRDSKGATLPHSLKSYSQDEARFFYMKMTLLLTNMSHGSIICCIFNPVTGEEKQTSIILANELFNRDRIWMESLASIVWIMLSVYILYIICFYWRTGCASGCLSKCFCVVTSWPVQIVHLLFCTGTFFAIYLPHRSRVSLSDPQFPLYNNWITELLFVILFLTICFALPIILLFIQFQFTSLTKWEKNKDGIMDQPRLGKAHETSSLYRKKTGKSWEQEK.

The N-terminal stretch at 1–25 (MMKPEFFCFSGFCVYFLFLQVVVSS) is a signal peptide. The 116-residue stretch at 26 to 141 (EKLRVTTPTR…DAAIMNLNVT (116 aa)) folds into the Ig-like V-type domain. The Extracellular portion of the chain corresponds to 26–248 (EKLRVTTPTR…FNRDRIWMES (223 aa)). The cysteines at positions 49 and 123 are disulfide-linked. 2 N-linked (GlcNAc...) asparagine glycosylation sites follow: N92 and N139. The region spanning 142–233 (AVGLETEIHV…TGEEKQTSII (92 aa)) is the Ig-like C1-type domain. C163 and C217 form a disulfide bridge. The chain crosses the membrane as a helical span at residues 249–269 (LASIVWIMLSVYILYIICFYW). Residues 270 to 287 (RTGCASGCLSKCFCVVTS) lie on the Cytoplasmic side of the membrane. A helical membrane pass occupies residues 288-308 (WPVQIVHLLFCTGTFFAIYLP). Residues 309–329 (HRSRVSLSDPQFPLYNNWITE) lie on the Extracellular side of the membrane. The chain crosses the membrane as a helical span at residues 330–350 (LLFVILFLTICFALPIILLFI). The Cytoplasmic segment spans residues 351-395 (QFQFTSLTKWEKNKDGIMDQPRLGKAHETSSLYRKKTGKSWEQEK). The tract at residues 371–395 (PRLGKAHETSSLYRKKTGKSWEQEK) is disordered.

This sequence belongs to the SKINT family. As to expression, expressed in skin, thymus, testis and, to a lower extent, bladder.

Its subcellular location is the membrane. May act by engaging a cell surface molecule on immature T-cells in the embryonic thymus. The protein is Selection and upkeep of intraepithelial T-cells protein 7 (Skint7) of Mus musculus (Mouse).